The chain runs to 1244 residues: Membrane-associated phosphatidylinositol transfer protein 1 (1244 aa).

A Phosphothreonine modification is found at T59. 2 disordered regions span residues 258–331 (KCNT…QSLS) and 339–358 (ARDS…EGFS). Residue T287 is modified to Phosphothreonine; by CDK1. The segment covering 299–319 (ASPDASFGKQWSSSSRSSYSS) has biased composition (low complexity). Residues S300, S304, S319, S326, S329, S342, S345, S346, and S373 each carry the phosphoserine modification. A Phosphoserine; by CDK1 modification is found at S382. Positions 581–682 (AGTGSRGSSR…SSEAPDGPSS (102 aa)) are disordered. A phosphoserine mark is found at S593, S600, and S621. Residues 643 to 658 (GSQNSLQAAPATTSSW) are compositionally biased toward polar residues. The DDHD domain maps to 686–880 (LDFKVSGFFL…VAFILRQVIE (195 aa)). Residue S896 is modified to Phosphoserine. A disordered region spans residues 1206 to 1244 (QLLRSRGPSQAEREGPGTPPTTLARGKARSISLKLDSEE). Omega-N-methylarginine occurs at positions 1211 and 1218. The residue at position 1237 (S1237) is a Phosphoserine.

The protein belongs to the PtdIns transfer protein family. PI transfer class IIA subfamily. As to quaternary structure, interacts with PIK4CA. Interacts with PTK2B via its C-terminus. Interacts with RHOA. Has higher affinity for the inactive, GDP-bound form of RHOA. The CDK1-phosphorylated form interacts with PLK1. Interacts with VAPB. In terms of processing, phosphorylated on multiple sites by CDK1 at the onset of mitosis. Phosphorylation facilitates dissociation from the Golgi complex and is required for interaction with PLK1. Phosphorylated on threonine residues upon treatment with oleic acid. Post-translationally, phosphorylated on tyrosine residues by PTK2B. As to expression, ubiquitous.

The protein localises to the cytoplasm. Its subcellular location is the golgi apparatus. The protein resides in the golgi stack membrane. It localises to the endoplasmic reticulum membrane. It is found in the lipid droplet. The protein localises to the cleavage furrow. Its subcellular location is the midbody. The enzyme catalyses a 1,2-diacyl-sn-glycero-3-phospho-(1D-myo-inositol)(in) = a 1,2-diacyl-sn-glycero-3-phospho-(1D-myo-inositol)(out). Functionally, catalyzes the transfer of phosphatidylinositol (PI) between membranes. Binds PI, phosphatidylcholine (PC) and phosphatidic acid (PA) with the binding affinity order of PI &gt; PA &gt; PC. Regulates RHOA activity, and plays a role in cytoskeleton remodeling. Necessary for normal completion of cytokinesis. Plays a role in maintaining normal diacylglycerol levels in the Golgi apparatus. Necessary for maintaining the normal structure of the endoplasmic reticulum and the Golgi apparatus. Required for protein export from the endoplasmic reticulum and the Golgi. Binds calcium ions. This is Membrane-associated phosphatidylinositol transfer protein 1 (PITPNM1) from Homo sapiens (Human).